The following is a 269-amino-acid chain: Ribosomal RNA large subunit methyltransferase E (269 aa).

S-adenosyl-L-methionine contacts are provided by Gly48, Trp50, Asp68, Asp86, and Asp111. Lys151 functions as the Proton acceptor in the catalytic mechanism. Residues 198–256 (PVAAGDRIEVTVEERGDEGDGIAYVEGYSIFVSDADVGETVTVEVVDAKPRFGFATRVD) enclose the TRAM domain.

It belongs to the class I-like SAM-binding methyltransferase superfamily. RNA methyltransferase RlmE family.

It is found in the cytoplasm. The enzyme catalyses uridine(2552) in 23S rRNA + S-adenosyl-L-methionine = 2'-O-methyluridine(2552) in 23S rRNA + S-adenosyl-L-homocysteine + H(+). Its function is as follows. Specifically methylates the uridine in position 2552 of 23S rRNA at the 2'-O position of the ribose in the fully assembled 50S ribosomal subunit. In Halorubrum lacusprofundi (strain ATCC 49239 / DSM 5036 / JCM 8891 / ACAM 34), this protein is Ribosomal RNA large subunit methyltransferase E.